A 468-amino-acid polypeptide reads, in one-letter code: POC1 centriolar protein homolog B (468 aa).

7 WD repeats span residues 16-55 (GHKDAVTCVDFSPDSKQLASSSADACVMIWNFKPQSRAYK), 58-97 (GHKEAVTCVQFSPSGHLVASSSKDRTVRLWAPNIKGESTV), 100-139 (AHTAVVRCVNFSSDGQTFITASDDKSIKAWNLHRQRFLFS), 142-181 (QHTNWVRCARFSPDGRLIASCSDDKTVRIWDLTNRLCINT), 184-223 (DYKGHSNYVDFNQMGTCVASAGADSTVKVWDIRMNKLLQH), 226-265 (VHNAGVSSLSFHPSGNYLLTASSDGTLKILDLLEGRLIYT), and 268-307 (GHQGPVLSVTFSKSGDQFASGATDAQVLVWKTNFDKYSVK). Residues 420–459 (NTLEQIVDQLNVLTQTVSILEHRLTLTEDKLKECLENQQK) are a coiled coil.

It belongs to the WD repeat POC1 family. In terms of assembly, interacts with pat. In terms of tissue distribution, highly expressed in ovary and, at low levels, in testis.

It localises to the cytoplasm. Its subcellular location is the cytoskeleton. The protein resides in the microtubule organizing center. The protein localises to the centrosome. It is found in the centriole. Its function is as follows. Plays an important role in centriole assembly and/or stability and ciliogenesis. Involved in early steps of centriole duplication, as well as in the later steps of centriole length control. The chain is POC1 centriolar protein homolog B (poc1b) from Xenopus laevis (African clawed frog).